Here is a 245-residue protein sequence, read N- to C-terminus: 1-(5-phosphoribosyl)-5-[(5-phosphoribosylamino)methylideneamino] imidazole-4-carboxamide isomerase (245 aa).

The active-site Proton acceptor is Asp-8. Asp-130 (proton donor) is an active-site residue.

It belongs to the HisA/HisF family.

Its subcellular location is the cytoplasm. It catalyses the reaction 1-(5-phospho-beta-D-ribosyl)-5-[(5-phospho-beta-D-ribosylamino)methylideneamino]imidazole-4-carboxamide = 5-[(5-phospho-1-deoxy-D-ribulos-1-ylimino)methylamino]-1-(5-phospho-beta-D-ribosyl)imidazole-4-carboxamide. It participates in amino-acid biosynthesis; L-histidine biosynthesis; L-histidine from 5-phospho-alpha-D-ribose 1-diphosphate: step 4/9. In Ectopseudomonas mendocina (strain ymp) (Pseudomonas mendocina), this protein is 1-(5-phosphoribosyl)-5-[(5-phosphoribosylamino)methylideneamino] imidazole-4-carboxamide isomerase.